The sequence spans 510 residues: 2-isopropylmalate synthase (510 aa).

The Pyruvate carboxyltransferase domain maps to 4–266 (IQVFDTTLRD…ETNLKLDETK (263 aa)). Positions 13, 201, 203, and 237 each coordinate Mn(2+). Positions 390-510 (QVETLQLQFV…DTARKDGVVS (121 aa)) are regulatory domain.

The protein belongs to the alpha-IPM synthase/homocitrate synthase family. LeuA type 1 subfamily. In terms of assembly, homodimer. Mn(2+) is required as a cofactor.

It localises to the cytoplasm. It carries out the reaction 3-methyl-2-oxobutanoate + acetyl-CoA + H2O = (2S)-2-isopropylmalate + CoA + H(+). The protein operates within amino-acid biosynthesis; L-leucine biosynthesis; L-leucine from 3-methyl-2-oxobutanoate: step 1/4. Catalyzes the condensation of the acetyl group of acetyl-CoA with 3-methyl-2-oxobutanoate (2-ketoisovalerate) to form 3-carboxy-3-hydroxy-4-methylpentanoate (2-isopropylmalate). The sequence is that of 2-isopropylmalate synthase from Staphylococcus carnosus (strain TM300).